We begin with the raw amino-acid sequence, 642 residues long: ATP-dependent rRNA helicase spb4 (642 aa).

A Q motif motif is present at residues 14-42; sequence WDGVTPALSEWVLDAVASMGFTRMTPVQA. A Helicase ATP-binding domain is found at 45–250; the sequence is IPLFMAHKDV…RVGLRNPVKV (206 aa). 58-65 contacts ATP; the sequence is AVTGSGKT. The DEAD box signature appears at 198 to 201; it reads DEAD. One can recognise a Helicase C-terminal domain in the interval 284 to 438; it reads AIKHILYSLE…TLTITDADAA (155 aa). Residues 522 to 625 adopt a coiled-coil conformation; that stretch reads AYKDKQREKR…RLLRRAAKDK (104 aa). 2 stretches are compositionally biased toward basic and acidic residues: residues 527-536 and 577-628; these read QREKRRKEQV and AKQA…KESK. The disordered stretch occupies residues 527-642; it reads QREKRRKEQV…DDDDEFKGFD (116 aa). Acidic residues predominate over residues 632 to 642; the sequence is GDDDDEFKGFD.

This sequence belongs to the DEAD box helicase family. DDX55/SPB4 subfamily. Component of pre-60S ribosomal complexes.

The protein resides in the nucleus. The protein localises to the nucleolus. The enzyme catalyses ATP + H2O = ADP + phosphate + H(+). Its function is as follows. ATP-binding RNA helicase involved in the biogenesis of 60S ribosomal subunits. Binds 90S pre-ribosomal particles and dissociates from pre-60S ribosomal particles after processing of 27SB pre-rRNA. Required for the normal formation of 18S rRNA through the processing of pre-rRNAs at sites A0, A1 and A2, and the normal formation of 25S and 5.8S rRNAs through the processing of pre-rRNAs at sites C1 and C2. The sequence is that of ATP-dependent rRNA helicase spb4 from Aspergillus niger (strain ATCC MYA-4892 / CBS 513.88 / FGSC A1513).